The sequence spans 289 residues: 4-diphosphocytidyl-2-C-methyl-D-erythritol kinase (289 aa).

Lys-10 is a catalytic residue. 94-104 (PVAAGLAGGSS) serves as a coordination point for ATP. Asp-136 is a catalytic residue.

It belongs to the GHMP kinase family. IspE subfamily.

It carries out the reaction 4-CDP-2-C-methyl-D-erythritol + ATP = 4-CDP-2-C-methyl-D-erythritol 2-phosphate + ADP + H(+). It functions in the pathway isoprenoid biosynthesis; isopentenyl diphosphate biosynthesis via DXP pathway; isopentenyl diphosphate from 1-deoxy-D-xylulose 5-phosphate: step 3/6. Functionally, catalyzes the phosphorylation of the position 2 hydroxy group of 4-diphosphocytidyl-2C-methyl-D-erythritol. The protein is 4-diphosphocytidyl-2-C-methyl-D-erythritol kinase of Bacillus anthracis.